The chain runs to 121 residues: Small ribosomal subunit protein uS13 (121 aa).

A disordered region spans residues 91-121 (HRRGLPVRGQKTKNNARTRKGPVKTVANKKK).

The protein belongs to the universal ribosomal protein uS13 family. As to quaternary structure, part of the 30S ribosomal subunit. Forms a loose heterodimer with protein S19. Forms two bridges to the 50S subunit in the 70S ribosome.

In terms of biological role, located at the top of the head of the 30S subunit, it contacts several helices of the 16S rRNA. In the 70S ribosome it contacts the 23S rRNA (bridge B1a) and protein L5 of the 50S subunit (bridge B1b), connecting the 2 subunits; these bridges are implicated in subunit movement. Contacts the tRNAs in the A and P-sites. The sequence is that of Small ribosomal subunit protein uS13 from Staphylococcus aureus (strain Mu3 / ATCC 700698).